The primary structure comprises 152 residues: Catabolic 3-dehydroquinase (152 aa).

The Proton acceptor role is filled by Tyr24. Residues Asn75, His81, and Asp88 each coordinate substrate. His101 serves as the catalytic Proton donor. Substrate is bound by residues 102 to 103 and Arg112; that span reads IS.

Belongs to the type-II 3-dehydroquinase family. In terms of assembly, homododecamer. Adopts a ring-like structure, composed of an arrangement of two hexameric rings stacked on top of one another.

The catalysed reaction is 3-dehydroquinate = 3-dehydroshikimate + H2O. It participates in aromatic compound metabolism; 3,4-dihydroxybenzoate biosynthesis; 3,4-dihydroxybenzoate from 3-dehydroquinate: step 1/2. Functionally, is involved in the catabolism of quinate. Allows the utilization of quinate as carbon source via the beta-ketoadipate pathway. This is Catabolic 3-dehydroquinase from Phaeosphaeria nodorum (strain SN15 / ATCC MYA-4574 / FGSC 10173) (Glume blotch fungus).